We begin with the raw amino-acid sequence, 67 residues long: Large ribosomal subunit protein uL30 (67 aa).

It belongs to the universal ribosomal protein uL30 family. As to quaternary structure, part of the 50S ribosomal subunit.

The chain is Large ribosomal subunit protein uL30 from Hamiltonella defensa subsp. Acyrthosiphon pisum (strain 5AT).